Here is a 247-residue protein sequence, read N- to C-terminus: tRNA pseudouridine synthase A (247 aa).

The active-site Nucleophile is the Asp52. Position 113 (Tyr113) interacts with substrate.

Belongs to the tRNA pseudouridine synthase TruA family. Homodimer.

The catalysed reaction is uridine(38/39/40) in tRNA = pseudouridine(38/39/40) in tRNA. Its function is as follows. Formation of pseudouridine at positions 38, 39 and 40 in the anticodon stem and loop of transfer RNAs. In Sinorhizobium fredii (strain NBRC 101917 / NGR234), this protein is tRNA pseudouridine synthase A.